We begin with the raw amino-acid sequence, 296 residues long: MNKIQESFLYMLKVERFFSKHTLKSYHDDLVQFNAFLEHEHLKLKSFEYKDARNYLSFLYSKGLKRTTVSRKISTLRSFYEFWMTQDDTVVNPFVQLVHPKKEQYLPHFFYEEEMSALFETVEADGHKGLRDRVILELLYGTGIRVSELVNIKLEDLDLNSPGVKVLGKGNKERFIPFGNMCRESIERYLELFPPIQNVKHDYLLVNINGRPITERGVRYVLNDIVKRTAGVTDIHPHKLRHTFATHMLNEGADLRTVQSLLGHVNLSTTGRYTHVSNQQLRKVYLNAHPRAKKEK.

Positions 1–84 (MNKIQESFLY…TLRSFYEFWM (84 aa)) constitute a Core-binding (CB) domain. One can recognise a Tyr recombinase domain in the interval 105–286 (YLPHFFYEEE…SNQQLRKVYL (182 aa)). Active-site residues include R145, K169, H238, R241, and H264. Y273 (O-(3'-phospho-DNA)-tyrosine intermediate) is an active-site residue.

This sequence belongs to the 'phage' integrase family. XerC subfamily. In terms of assembly, forms a cyclic heterotetrameric complex composed of two molecules of XerC and two molecules of XerD.

Its subcellular location is the cytoplasm. Site-specific tyrosine recombinase, which acts by catalyzing the cutting and rejoining of the recombining DNA molecules. The XerC-XerD complex is essential to convert dimers of the bacterial chromosome into monomers to permit their segregation at cell division. It also contributes to the segregational stability of plasmids. The polypeptide is Tyrosine recombinase XerC (Staphylococcus carnosus (strain TM300)).